The primary structure comprises 128 residues: Glycine cleavage system H protein (128 aa).

The region spanning 25–107 (TVRVGITDFA…YEGGWLFEIT (83 aa)) is the Lipoyl-binding domain. An N6-lipoyllysine modification is found at K66.

Belongs to the GcvH family. As to quaternary structure, the glycine cleavage system is composed of four proteins: P, T, L and H. It depends on (R)-lipoate as a cofactor.

The glycine cleavage system catalyzes the degradation of glycine. The H protein shuttles the methylamine group of glycine from the P protein to the T protein. The chain is Glycine cleavage system H protein from Micrococcus luteus (strain ATCC 4698 / DSM 20030 / JCM 1464 / CCM 169 / CCUG 5858 / IAM 1056 / NBRC 3333 / NCIMB 9278 / NCTC 2665 / VKM Ac-2230) (Micrococcus lysodeikticus).